The chain runs to 142 residues: Large ribosomal subunit protein uL11 (142 aa).

The protein belongs to the universal ribosomal protein uL11 family. In terms of assembly, part of the ribosomal stalk of the 50S ribosomal subunit. Interacts with L10 and the large rRNA to form the base of the stalk. L10 forms an elongated spine to which L12 dimers bind in a sequential fashion forming a multimeric L10(L12)X complex. One or more lysine residues are methylated.

In terms of biological role, forms part of the ribosomal stalk which helps the ribosome interact with GTP-bound translation factors. This Photorhabdus laumondii subsp. laumondii (strain DSM 15139 / CIP 105565 / TT01) (Photorhabdus luminescens subsp. laumondii) protein is Large ribosomal subunit protein uL11.